Consider the following 162-residue polypeptide: FCS-Like Zinc finger 6 (162 aa).

2 disordered regions span residues 25–47 (NLPS…YGSN) and 121–162 (RQEQ…AAAV). A compositionally biased stretch (polar residues) spans 27-47 (PSESEPSNQQKPTVASPYGSN). Residues 88–132 (HFLRSCALCERLLVPGRDIYMYRGDKAFCSSECRQEQMAQDERKE) form an FLZ-type zinc finger. The span at 147 to 162 (APARAKPGKGRAAAAV) shows a compositional bias: low complexity.

This sequence belongs to the FLZ family. In terms of assembly, interacts with KIN10 and KIN11 via its FLZ-type zinc finger domain. Early expressed in hypocotyl and cotyledon. Later expressed in old or senescing leaves and in pistil, pollen and filament of open flowers.

Its subcellular location is the nucleus. The protein localises to the cytoplasm. The protein resides in the endoplasmic reticulum. Its function is as follows. May act as an adapter to facilitate the interaction of SnRK1 complex with effector proteins, conferring tissue- and stimulus-type specific differences in the SnRK1 regulation pathway. Negatively regulates KIN10 leading to a repression of the SnRK1 signaling pathway. The sequence is that of FCS-Like Zinc finger 6 from Arabidopsis thaliana (Mouse-ear cress).